Consider the following 344-residue polypeptide: Interactor of constitutive active ROPs 1 (344 aa).

Disordered regions lie at residues 1–74, 92–139, 186–218, and 307–344; these read MPRP…ESQL, EAVK…KETD, HESL…DEMV, and FMDP…KGQK. Low complexity predominate over residues 19-29; sequence SSSSTSDSNHS. Residues 60–108 are a coiled coil; sequence QKKLGGRISDLESQLGQAQEELRLLKEQLANAEAVKKQAQDELHKKSKK. Basic and acidic residues-rich tracts occupy residues 93-103, 114-139, and 186-195; these read AVKKQAQDELH, RVEE…KETD, and HESLGKENES. The stretch at 145-273 forms a coiled coil; that stretch reads VEKIAVEEEE…EQWRKAADAA (129 aa). Residues 196-211 show a composition bias toward polar residues; sequence LKNQLSDSASEISNVK.

The protein belongs to the ICR family. Homooligomer. Interacts with ARAC3, ARAC4, ARAC8, ARAC11 and SEC3A, but not with ICR2 or EXO70A1. As to expression, expressed in mature and germinating pollen. Expressed throughout the embryo but not in the hypophysis and quiescent center (QC). In roots, absent from the QC and the stem cells.

It is found in the cell membrane. The protein resides in the nucleus. Acts as a scaffold, mediating interaction of ROPs with different proteins. Required for primary and adventitious root maintenance, but not for their formation. Promotes the stabilization of ARAC11 on the plasma membrane of the pollen tube initiation site but not the activation of ARAC11. Regulates directionality of polar auxin transport, and is required for the formation of a stable auxin maximum and tip localized auxin gradient during embryogenesis, organogenesis, and meristem activity. Involved in exocytosis and in the recycling of PIN proteins back to the plasma membrane. This Arabidopsis thaliana (Mouse-ear cress) protein is Interactor of constitutive active ROPs 1 (ICR1).